The primary structure comprises 99 residues: Aspartyl/glutamyl-tRNA(Asn/Gln) amidotransferase subunit C (99 aa).

The protein belongs to the GatC family. In terms of assembly, heterotrimer of A, B and C subunits.

The catalysed reaction is L-glutamyl-tRNA(Gln) + L-glutamine + ATP + H2O = L-glutaminyl-tRNA(Gln) + L-glutamate + ADP + phosphate + H(+). The enzyme catalyses L-aspartyl-tRNA(Asn) + L-glutamine + ATP + H2O = L-asparaginyl-tRNA(Asn) + L-glutamate + ADP + phosphate + 2 H(+). Allows the formation of correctly charged Asn-tRNA(Asn) or Gln-tRNA(Gln) through the transamidation of misacylated Asp-tRNA(Asn) or Glu-tRNA(Gln) in organisms which lack either or both of asparaginyl-tRNA or glutaminyl-tRNA synthetases. The reaction takes place in the presence of glutamine and ATP through an activated phospho-Asp-tRNA(Asn) or phospho-Glu-tRNA(Gln). The sequence is that of Aspartyl/glutamyl-tRNA(Asn/Gln) amidotransferase subunit C from Cupriavidus metallidurans (strain ATCC 43123 / DSM 2839 / NBRC 102507 / CH34) (Ralstonia metallidurans).